A 182-amino-acid chain; its full sequence is Transcription termination/antitermination protein NusG (182 aa).

The protein belongs to the NusG family.

Functionally, participates in transcription elongation, termination and antitermination. The chain is Transcription termination/antitermination protein NusG from Chlamydia trachomatis serovar D (strain ATCC VR-885 / DSM 19411 / UW-3/Cx).